The chain runs to 349 residues: MTGKKVCIVGSGNWGSAIAKIVGGNAAQLAHFDPRVTMWVFEEDIGGRKLTEIINTQHENVKYLPGHKLPPNVVAVPDVVQAAADADILIFVVPHQFIGKICDQLKGHLKADTIGVSLIKGVDEGPKGLKLISEVIGERLGIPMSVLMGANIANEVADEKFCETTIGSKNQAHGQLLKELMQTPNFRITVVQEVDTVEICGALKNIVAVGAGFCDGLGFGDNTKAAVIRLGLMEMIAFAKLFCSGSVSSATFLESCGVADLITTCYGGRNRKVAEAFARTGKSIEQLEKEMLNGQKLQGPQTARELHSILQHKGMVDKFPLFTAVYKVCYENQPVGEFIHCLQNHPEHV.

An NAD(+)-binding site is contributed by 10 to 15; it reads GSGNWG. Position 120 (Lys-120) interacts with substrate. Ala-153 provides a ligand contact to NAD(+). The Proton acceptor role is filled by Lys-204. Residue Arg-269 participates in NAD(+) binding. Substrate is bound at residue 269 to 270; that stretch reads RN. Lys-289 is subject to N6-succinyllysine. Residues Lys-296 and Gln-298 each contribute to the NAD(+) site. At Tyr-326 the chain carries Phosphotyrosine.

It belongs to the NAD-dependent glycerol-3-phosphate dehydrogenase family. In terms of assembly, homodimer.

The protein localises to the cytoplasm. It catalyses the reaction sn-glycerol 3-phosphate + NAD(+) = dihydroxyacetone phosphate + NADH + H(+). Functionally, has glycerol-3-phosphate dehydrogenase activity. This chain is Glycerol-3-phosphate dehydrogenase [NAD(+)], cytoplasmic (GPD1), found in Bos taurus (Bovine).